Reading from the N-terminus, the 85-residue chain is MPKLEMMLLVLLILPLCYIDAVGPPPPWNMEDEIIEHWQKLHCHEISDLTPWILCSPEPLCGGKGCCAQEVCDCSGPACTCPPCL.

An N-terminal signal peptide occupies residues 1-21 (MPKLEMMLLVLLILPLCYIDA). Residues 22–40 (VGPPPPWNMEDEIIEHWQK) constitute a propeptide that is removed on maturation. 4 disulfides stabilise this stretch: Cys61-Cys74, Cys66-Cys84, Cys67-Cys79, and Cys72-Cys81.

Belongs to the conotoxin D superfamily. As to expression, expressed by the venom duct.

It localises to the secreted. Its function is as follows. Alpha-conotoxins act on postsynaptic membranes, they bind to the nicotinic acetylcholine receptors (nAChR) and thus inhibit them. This toxin weakly inhibits alpha-9-alpha-10/CHRNA9-CHRNA10 nAChRs (IC(50)=3 uM). This chain is Alpha-conotoxin Lt28.1, found in Conus litteratus (Lettered cone).